The chain runs to 566 residues: OTU domain-containing protein 5 (566 aa).

2 disordered regions span residues 1–117 (MTIL…GDAL) and 145–175 (GPGHSKRRRQAPGVGAVGGASPEREEVGAGY). Pro residues predominate over residues 11-30 (PPDADPANEPPPPGPLPPAP). A compositionally biased stretch (gly residues) spans 34–47 (AGVGVGGGGTGVGG). Over residues 63–75 (ASPPPQGPLPGPP) the composition is skewed to pro residues. Ser64 bears the Phosphoserine mark. A compositionally biased stretch (low complexity) spans 84 to 97 (AVPPGAVAGPRPQQ). A compositionally biased stretch (gly residues) spans 105–115 (GPGGPGGGPGD). A Phosphoserine modification is found at Ser165. Phosphotyrosine is present on Tyr175. Ser177 is modified (phosphoserine). The residue at position 195 (Thr195) is a Phosphothreonine. One can recognise an OTU domain in the interval 213–336 (FIIKQMKEDG…NIHYNSVVNP (124 aa)). Positions 218-224 (MKEDGAC) are cys-loop. The active site involves Asp221. Catalysis depends on Cys224, which acts as the Nucleophile. The variable-loop stretch occupies residues 273-283 (KRKNNCHGNHI). Ser323 carries the phosphoserine modification. The segment at 324 to 329 (YHRNIH) is his-loop. The active site involves His329. Ser332 and Ser370 each carry phosphoserine. Positions 413 to 499 (ARQVRGPSQP…TSSQFSAGGD (87 aa)) are disordered. Low complexity-rich tracts occupy residues 425 to 438 (ASATCSSATAAASS) and 445 to 457 (SRSPRQRSSASSP). Ser447 bears the Phosphoserine mark. Position 502 is a phosphothreonine (Thr502). Ser503 is modified (phosphoserine).

Belongs to the peptidase C85 family. As to quaternary structure, interacts with TRAF3. Phosphorylation at Ser-177 is required for deubiquitinating activity. Phosphorylation at Ser-323, Ser-332 and Ser-503 by MTOR promotes its activity.

It localises to the nucleus. It carries out the reaction Thiol-dependent hydrolysis of ester, thioester, amide, peptide and isopeptide bonds formed by the C-terminal Gly of ubiquitin (a 76-residue protein attached to proteins as an intracellular targeting signal).. With respect to regulation, inhibited by N-ethyl-maleimide (NEM). In terms of biological role, deubiquitinating enzyme that functions as a negative regulator of the innate immune system. Has peptidase activity towards 'Lys-48'- and 'Lys-63'-linked polyubiquitin chains. Can also cleave 'Lys-11'-linked ubiquitin chains (in vitro). Acts via TRAF3 deubiquitination and subsequent suppression of type I interferon (IFN) production. Controls neuroectodermal differentiation through cleaving 'Lys-48'-linked ubiquitin chains to counteract degradation of select chromatin regulators such as ARID1A, HDAC2 and HCF1. Acts as a positive regulator of mTORC1 and mTORC2 signaling following phosphorylation by MTOR: acts by mediating deubiquitination of BTRC, leading to its stability. The polypeptide is OTU domain-containing protein 5 (Mus musculus (Mouse)).